We begin with the raw amino-acid sequence, 251 residues long: Cytochrome c oxidase subunit 2 (251 aa).

The N-terminal stretch at 1 to 15 (MLNLLYNQIFNVILN) is a signal peptide. The Mitochondrial intermembrane segment spans residues 16-41 (DVPTPYNTYFQDSATPNQEGILELHD). Residues 42-62 (NIMFYLLVILGLVSWLLFTIT) traverse the membrane as a helical segment. The Mitochondrial matrix segment spans residues 63-82 (RTYSKNPIAYKYIKHGQTIE). The helical transmembrane segment at 83–103 (IIWTIFPAVILLIIAFPSFIL) threads the bilayer. At 104 to 251 (LYLCDEVISP…PAFLEWLNEQ (148 aa)) the chain is on the mitochondrial intermembrane side. 6 residues coordinate Cu cation: His-186, Cys-221, Glu-223, Cys-225, His-229, and Met-232. Mg(2+) is bound at residue Glu-223.

It belongs to the cytochrome c oxidase subunit 2 family. Component of the cytochrome c oxidase (complex IV, CIV), a multisubunit enzyme composed of a catalytic core of 3 subunits and several supernumerary subunits. The complex exists as a monomer or a dimer and forms supercomplexes (SCs) in the inner mitochondrial membrane with ubiquinol-cytochrome c oxidoreductase (cytochrome b-c1 complex, complex III, CIII). Cu cation is required as a cofactor. The signal sequence of COX2 is processed by IMP1.

The protein resides in the mitochondrion inner membrane. The enzyme catalyses 4 Fe(II)-[cytochrome c] + O2 + 8 H(+)(in) = 4 Fe(III)-[cytochrome c] + 2 H2O + 4 H(+)(out). Functionally, component of the cytochrome c oxidase, the last enzyme in the mitochondrial electron transport chain which drives oxidative phosphorylation. The respiratory chain contains 3 multisubunit complexes succinate dehydrogenase (complex II, CII), ubiquinol-cytochrome c oxidoreductase (cytochrome b-c1 complex, complex III, CIII) and cytochrome c oxidase (complex IV, CIV), that cooperate to transfer electrons derived from NADH and succinate to molecular oxygen, creating an electrochemical gradient over the inner membrane that drives transmembrane transport and the ATP synthase. Cytochrome c oxidase is the component of the respiratory chain that catalyzes the reduction of oxygen to water. Electrons originating from reduced cytochrome c in the intermembrane space (IMS) are transferred via the dinuclear copper A center (CU(A)) of subunit 2 and heme A of subunit 1 to the active site in subunit 1, a binuclear center (BNC) formed by heme A3 and copper B (CU(B)). The BNC reduces molecular oxygen to 2 water molecules using 4 electrons from cytochrome c in the IMS and 4 protons from the mitochondrial matrix. This is Cytochrome c oxidase subunit 2 (COX2) from Lachancea thermotolerans (strain ATCC 56472 / CBS 6340 / NRRL Y-8284) (Yeast).